A 469-amino-acid chain; its full sequence is Ufm1-specific protease 2 (469 aa).

The residue at position 1 (M1) is an N-acetylmethionine. Residues C302, D426, and H428 contribute to the active site.

It belongs to the peptidase C78 family.

The protein localises to the endoplasmic reticulum. Its subcellular location is the cytoplasm. It is found in the nucleus. Its function is as follows. Thiol-dependent isopeptidase that specifically cleaves UFM1, a ubiquitin-like modifier protein, from conjugated proteins, such as CD274/PD-L1, CYB5R3, DDRGK1, MRE11, RPL26/uL24, TRIP4 and RPL26/uL24. While it is also able to mediate the processing of UFM1 precursors, a prerequisite for conjugation reactions, UFSP2 mainly acts as a protein deUFMylase that mediates deconjugation of UFM1 from target proteins. Mediates deUFMylation of RPL26/uL24, a critical step to release the UFM1 ribosome E3 ligase (UREL) complex during the recycling of 60S ribosome subunits from the endoplasmic reticulum. Catalyzes deUFMylation of TRIP4, regulating intracellular nuclear receptors transactivation and thereby regulate cell proliferation and differentiation. The polypeptide is Ufm1-specific protease 2 (Pongo abelii (Sumatran orangutan)).